A 533-amino-acid polypeptide reads, in one-letter code: Putative sel1-like repeat-containing protein L21 (533 aa).

Sel1-like repeat units lie at residues 105 to 140 (VLSQNNLGFMYEEGIGTEIKINKAKMWYTLSANQGL), 141 to 172 (SFAQYNLGYYYYNKAKYEKSINYFQKSAQSGY), 173 to 206 (YLSNFMLAETYLKLSIPNFNEAIKNYLLAANQGC), 207 to 242 (NISQYRLGMIYFEGKYVNTDMNQAYKWFKLSAKQGN), and 243 to 278 (YFSQYGLGRVYYSMDSTKYNCQKAINCFIKSANCGH).

The protein is Putative sel1-like repeat-containing protein L21 of Acanthamoeba polyphaga mimivirus (APMV).